Reading from the N-terminus, the 278-residue chain is Shikimate dehydrogenase (NADP(+)) (278 aa).

Residues 19–21 and T66 each bind shikimate; that span reads SLS. K70 acts as the Proton acceptor in catalysis. D82 is an NADP(+) binding site. 2 residues coordinate shikimate: N91 and D107. NADP(+)-binding positions include 133-137, 157-162, and I222; these read GSGGA and NRTRAR. Y224 is a binding site for shikimate. Position 245 (G245) interacts with NADP(+).

This sequence belongs to the shikimate dehydrogenase family. In terms of assembly, homodimer.

The enzyme catalyses shikimate + NADP(+) = 3-dehydroshikimate + NADPH + H(+). The protein operates within metabolic intermediate biosynthesis; chorismate biosynthesis; chorismate from D-erythrose 4-phosphate and phosphoenolpyruvate: step 4/7. Functionally, involved in the biosynthesis of the chorismate, which leads to the biosynthesis of aromatic amino acids. Catalyzes the reversible NADPH linked reduction of 3-dehydroshikimate (DHSA) to yield shikimate (SA). The protein is Shikimate dehydrogenase (NADP(+)) of Jannaschia sp. (strain CCS1).